Here is a 399-residue protein sequence, read N- to C-terminus: 1-deoxy-D-xylulose 5-phosphate reductoisomerase (399 aa).

Positions 16, 17, 18, 19, 42, 43, 44, and 127 each coordinate NADPH. K128 serves as a coordination point for 1-deoxy-D-xylulose 5-phosphate. Position 129 (E129) interacts with NADPH. D153 is a binding site for Mn(2+). 1-deoxy-D-xylulose 5-phosphate contacts are provided by S154, E155, S179, and H202. Mn(2+) is bound at residue E155. G208 contacts NADPH. The 1-deoxy-D-xylulose 5-phosphate site is built by S215, N220, K221, and E224. A Mn(2+)-binding site is contributed by E224.

The protein belongs to the DXR family. It depends on Mg(2+) as a cofactor. Mn(2+) serves as cofactor.

The catalysed reaction is 2-C-methyl-D-erythritol 4-phosphate + NADP(+) = 1-deoxy-D-xylulose 5-phosphate + NADPH + H(+). Its pathway is isoprenoid biosynthesis; isopentenyl diphosphate biosynthesis via DXP pathway; isopentenyl diphosphate from 1-deoxy-D-xylulose 5-phosphate: step 1/6. Catalyzes the NADPH-dependent rearrangement and reduction of 1-deoxy-D-xylulose-5-phosphate (DXP) to 2-C-methyl-D-erythritol 4-phosphate (MEP). In Caulobacter vibrioides (strain NA1000 / CB15N) (Caulobacter crescentus), this protein is 1-deoxy-D-xylulose 5-phosphate reductoisomerase.